A 270-amino-acid polypeptide reads, in one-letter code: uncharacterized protein (270 aa).

This is an uncharacterized protein from Aquifex aeolicus (strain VF5).